The primary structure comprises 187 residues: Elongation factor P (187 aa).

It belongs to the elongation factor P family.

The protein resides in the cytoplasm. It functions in the pathway protein biosynthesis; polypeptide chain elongation. Its function is as follows. Involved in peptide bond synthesis. Stimulates efficient translation and peptide-bond synthesis on native or reconstituted 70S ribosomes in vitro. Probably functions indirectly by altering the affinity of the ribosome for aminoacyl-tRNA, thus increasing their reactivity as acceptors for peptidyl transferase. The protein is Elongation factor P of Corynebacterium efficiens (strain DSM 44549 / YS-314 / AJ 12310 / JCM 11189 / NBRC 100395).